The following is a 299-amino-acid chain: Putative pyrroline-5-carboxylate reductase 4 (299 aa).

Belongs to the pyrroline-5-carboxylate reductase family.

The catalysed reaction is L-proline + NADP(+) = (S)-1-pyrroline-5-carboxylate + NADPH + 2 H(+). The enzyme catalyses L-proline + NAD(+) = (S)-1-pyrroline-5-carboxylate + NADH + 2 H(+). The protein operates within amino-acid biosynthesis; L-proline biosynthesis; L-proline from L-glutamate 5-semialdehyde: step 1/1. The polypeptide is Putative pyrroline-5-carboxylate reductase 4 (Caenorhabditis elegans).